The primary structure comprises 292 residues: Probable alpha-L-glutamate ligase (292 aa).

Positions 104-287 constitute an ATP-grasp domain; the sequence is HQLLAAKGID…VATRIIEHVE (184 aa). ATP-binding positions include Lys-141, 178-179, Asp-187, and 211-213; these read EF and RSN. Mg(2+) contacts are provided by Asp-248, Glu-260, and Asn-262. Positions 248, 260, and 262 each coordinate Mn(2+).

The protein belongs to the RimK family. Mg(2+) serves as cofactor. It depends on Mn(2+) as a cofactor.

In Stenotrophomonas maltophilia (strain R551-3), this protein is Probable alpha-L-glutamate ligase.